The primary structure comprises 376 residues: tRNA-specific 2-thiouridylase MnmA (376 aa).

Residues 14-21 (GMSGGVDS) and Met40 each bind ATP. The segment at 100–102 (NPD) is interaction with target base in tRNA. Residue Cys105 is the Nucleophile of the active site. Cys105 and Cys202 are disulfide-bonded. Gly129 is a binding site for ATP. Residues 152-154 (KDQ) are interaction with tRNA. The Cysteine persulfide intermediate role is filled by Cys202. Residues 315-316 (RY) form an interaction with tRNA region.

It belongs to the MnmA/TRMU family.

The protein resides in the cytoplasm. The catalysed reaction is S-sulfanyl-L-cysteinyl-[protein] + uridine(34) in tRNA + AH2 + ATP = 2-thiouridine(34) in tRNA + L-cysteinyl-[protein] + A + AMP + diphosphate + H(+). Its function is as follows. Catalyzes the 2-thiolation of uridine at the wobble position (U34) of tRNA, leading to the formation of s(2)U34. This Lactococcus lactis subsp. cremoris (strain SK11) protein is tRNA-specific 2-thiouridylase MnmA.